A 123-amino-acid polypeptide reads, in one-letter code: MARIAGVDLPREKRVEVGLTYIFGIGRQTSNKILAATGINVDTRIKDLTEEEVNELRKLIDADYQVEGDLRREVSLNIKRLKEIRCYRGIRHTKGLPVRGQKTKTNARTRKGPKRTVGRKKKK.

The tract at residues 95-123 is disordered; sequence GLPVRGQKTKTNARTRKGPKRTVGRKKKK. The segment covering 101-123 has biased composition (basic residues); that stretch reads QKTKTNARTRKGPKRTVGRKKKK.

It belongs to the universal ribosomal protein uS13 family. As to quaternary structure, part of the 30S ribosomal subunit. Forms a loose heterodimer with protein S19. Forms two bridges to the 50S subunit in the 70S ribosome.

Located at the top of the head of the 30S subunit, it contacts several helices of the 16S rRNA. In the 70S ribosome it contacts the 23S rRNA (bridge B1a) and protein L5 of the 50S subunit (bridge B1b), connecting the 2 subunits; these bridges are implicated in subunit movement. Contacts the tRNAs in the A and P-sites. This chain is Small ribosomal subunit protein uS13, found in Alkaliphilus metalliredigens (strain QYMF).